Consider the following 313-residue polypeptide: Ribosomal RNA small subunit methyltransferase H (313 aa).

Residues A33 to H35, D53, F82, D103, and Q110 contribute to the S-adenosyl-L-methionine site.

The protein belongs to the methyltransferase superfamily. RsmH family.

The protein localises to the cytoplasm. The enzyme catalyses cytidine(1402) in 16S rRNA + S-adenosyl-L-methionine = N(4)-methylcytidine(1402) in 16S rRNA + S-adenosyl-L-homocysteine + H(+). Its function is as follows. Specifically methylates the N4 position of cytidine in position 1402 (C1402) of 16S rRNA. This chain is Ribosomal RNA small subunit methyltransferase H, found in Ruminiclostridium cellulolyticum (strain ATCC 35319 / DSM 5812 / JCM 6584 / H10) (Clostridium cellulolyticum).